We begin with the raw amino-acid sequence, 327 residues long: DNA-directed RNA polymerase subunit alpha (327 aa).

Positions 1-231 (MIYQMQMPAK…DHVLLFADFS (231 aa)) are alpha N-terminal domain (alpha-NTD). The interval 247 to 327 (DEFETMRRLL…GMDITRYQMK (81 aa)) is alpha C-terminal domain (alpha-CTD).

The protein belongs to the RNA polymerase alpha chain family. As to quaternary structure, homodimer. The RNAP catalytic core consists of 2 alpha, 1 beta, 1 beta' and 1 omega subunit. When a sigma factor is associated with the core the holoenzyme is formed, which can initiate transcription.

It catalyses the reaction RNA(n) + a ribonucleoside 5'-triphosphate = RNA(n+1) + diphosphate. Its function is as follows. DNA-dependent RNA polymerase catalyzes the transcription of DNA into RNA using the four ribonucleoside triphosphates as substrates. The sequence is that of DNA-directed RNA polymerase subunit alpha from Chlorobium chlorochromatii (strain CaD3).